Here is a 136-residue protein sequence, read N- to C-terminus: Large ribosomal subunit protein bL21 (136 aa).

It belongs to the bacterial ribosomal protein bL21 family. Part of the 50S ribosomal subunit. Contacts protein L20.

Functionally, this protein binds to 23S rRNA in the presence of protein L20. In Gloeothece citriformis (strain PCC 7424) (Cyanothece sp. (strain PCC 7424)), this protein is Large ribosomal subunit protein bL21.